Consider the following 821-residue polypeptide: Envelope glycoprotein H (821 aa).

The first 20 residues, 1–20 (MMCLIIYLSIFLIIVSRMLT), serve as a signal peptide directing secretion. Residues 21–783 (GLPMMDRPDE…TSHEVIVFSS (763 aa)) are Virion surface-facing. N-linked (GlcNAc...) asparagine; by host glycosylation occurs at asparagine 66. The tract at residues 163 to 186 (QTQPLGHITNPPRRSPKDKPTTSG) is disordered. Asparagine 236, asparagine 241, asparagine 308, asparagine 414, asparagine 492, asparagine 647, asparagine 741, and asparagine 764 each carry an N-linked (GlcNAc...) asparagine; by host glycan. Residues 236–299 (NRTLVNVTIG…SEGPLYKVYV (64 aa)) form an interaction with gL region. Residues 784 to 804 (NFIWASIGGVFAACLIIYIII) traverse the membrane as a helical segment. The Intravirion portion of the chain corresponds to 805–821 (KMLCSFTPDVRYTLLNN).

This sequence belongs to the herpesviridae glycoprotein H family. As to quaternary structure, interacts with glycoprotein L (gL); this interaction is necessary for the correct processing and cell surface expression of gH. The heterodimer gH/gL seems to interact with gB trimers during fusion. In terms of processing, N-glycosylated, O-glycosylated, and sialylated.

The protein resides in the virion membrane. Its subcellular location is the host cell membrane. It localises to the host endosome membrane. The heterodimer glycoprotein H-glycoprotein L is required for the fusion of viral and plasma membranes leading to virus entry into the host cell. Following initial binding to host receptor, membrane fusion is mediated by the fusion machinery composed of gB and the heterodimer gH/gL. May also be involved in the fusion between the virion envelope and the outer nuclear membrane during virion morphogenesis. The polypeptide is Envelope glycoprotein H (Feline herpesvirus 1 (FeHV-1)).